Reading from the N-terminus, the 254-residue chain is Phosphoglycerate mutase 1 (254 aa).

Residues 10–17 and 23–24 contribute to the substrate site; these read RHGESAWN and SG. The Tele-phosphohistidine intermediate role is filled by His11. Ser14 and Ser23 each carry phosphoserine. Position 26 is a phosphotyrosine (Tyr26). Ser31 carries the phosphoserine modification. Substrate is bound by residues Arg62, 89 to 92, and Lys100; that span reads ERHY. The active-site Proton donor/acceptor is the Glu89. Lys106 is subject to N6-acetyllysine. 116–117 lines the substrate pocket; it reads RR. Position 118 is a phosphoserine (Ser118). 187–188 contacts substrate; the sequence is GN. The residue at position 251 (Lys251) is an N6-acetyllysine; alternate. Lys251 bears the N6-succinyllysine; alternate mark. 2 positions are modified to N6-acetyllysine: Lys253 and Lys254.

This sequence belongs to the phosphoglycerate mutase family. BPG-dependent PGAM subfamily. In terms of assembly, homodimer. Post-translationally, acetylated at Lys-253, Lys-253 and Lys-254 under high glucose condition. Acetylation increases catalytic activity. Under glucose restriction SIRT1 levels dramatically increase and it deacetylates the enzyme.

It catalyses the reaction (2R)-2-phosphoglycerate = (2R)-3-phosphoglycerate. The enzyme catalyses (2R)-3-phospho-glyceroyl phosphate = (2R)-2,3-bisphosphoglycerate + H(+). Its function is as follows. Catalyzes the interconversion of 2-phosphoglycerate and 3-phosphoglyceratea crucial step in glycolysis, by using 2,3-bisphosphoglycerate. Also catalyzes the interconversion of (2R)-2,3-bisphosphoglycerate and (2R)-3-phospho-glyceroyl phosphate. The protein is Phosphoglycerate mutase 1 of Pongo abelii (Sumatran orangutan).